The primary structure comprises 229 residues: Putative N-acetylmannosamine-6-phosphate 2-epimerase (229 aa).

It belongs to the NanE family.

The catalysed reaction is an N-acyl-D-glucosamine 6-phosphate = an N-acyl-D-mannosamine 6-phosphate. It participates in amino-sugar metabolism; N-acetylneuraminate degradation; D-fructose 6-phosphate from N-acetylneuraminate: step 3/5. In terms of biological role, converts N-acetylmannosamine-6-phosphate (ManNAc-6-P) to N-acetylglucosamine-6-phosphate (GlcNAc-6-P). This chain is Putative N-acetylmannosamine-6-phosphate 2-epimerase, found in Escherichia coli O7:K1 (strain IAI39 / ExPEC).